Consider the following 392-residue polypeptide: MEAPLVSLDEEFEDLRPSCSEDPEEKPQCFYGSSPHHLEDPSLSELENFSSEIISFKSMEDLVNEFDEKLNVCFRNYNAKTENLAPVKNQLQIQEEEETLQDEEVWDALTDNYIPSLSEDWRDPNIEALNGNCSDTEIHEKEEEEFNEKSENDSGINEEPLLTADQVIEEIEEMMQNSPDPEEEEEVLEEEDGGETSSQADSVLLQEMQALTQTFNNNWSYEGLRHMSGSELTELLDQVEGAIRDFSEELVQQLARRDELEFEKEVKNSFITVLIEVQNKQKEQRELMKKRRKEKGLSLQSSRIEKGNQMPLKRFSMEGISNILQSGIRQTFGSSGTDKQYLNTVIPYEKKASPPSVEDLQMLTNILFAMKEDNEKVPTLLTDYILKVLCPT.

Positions 1–37 (MEAPLVSLDEEFEDLRPSCSEDPEEKPQCFYGSSPHH) are disordered. The residue at position 58 (S58) is a Phosphoserine. The disordered stretch occupies residues 175-198 (MQNSPDPEEEEEVLEEEDGGETSS). Residues 180 to 194 (DPEEEEEVLEEEDGG) are compositionally biased toward acidic residues. Positions 230 to 298 (SELTELLDQV…KKRRKEKGLS (69 aa)) form a coiled coil. S298 and S316 each carry phosphoserine.

Belongs to the zygin family. As to quaternary structure, homodimer; disulfide-linked. May form heterodimers with FEZ2. Interacts with the NH2-terminal variable region (V1) of PKC zeta and weakly with that of PKC epsilon. Interacts with UBE4B. Interacts with SAP30L. Interacts with SCOC and ULK1; SCOC interferes with ULK1-binding to FEZ1. Directly interacts with SCOC and UVRAG. Stabilizes the interaction between SCOC and UVRAG during amino acid starvation. In terms of processing, phosphorylated by protein kinase C zeta; which enhances interaction with UBE4B and polyubiquitination. Polyubiquitinated in a UBE4B-dependent manner; which does not lead to proteasomal degradation and may be important for neurogenic activity. Polyubiquitin linkage seems to be mainly through Lys-26. As to expression, mainly expressed in brain.

It is found in the cytoplasm. The protein localises to the cytoskeleton. The protein resides in the microtubule organizing center. Its subcellular location is the centrosome. It localises to the cell membrane. Functionally, may be involved in axonal outgrowth as component of the network of molecules that regulate cellular morphology and axon guidance machinery. Able to restore partial locomotion and axonal fasciculation to C.elegans unc-76 mutants in germline transformation experiments. May participate in the transport of mitochondria and other cargos along microtubules. In Homo sapiens (Human), this protein is Fasciculation and elongation protein zeta-1 (FEZ1).